Reading from the N-terminus, the 224-residue chain is Endonuclease NucS (224 aa).

The protein belongs to the NucS endonuclease family.

The protein resides in the cytoplasm. Cleaves both 3' and 5' ssDNA extremities of branched DNA structures. This is Endonuclease NucS from Rhodococcus jostii (strain RHA1).